The primary structure comprises 699 residues: Glycine--tRNA ligase beta subunit (699 aa).

This sequence belongs to the class-II aminoacyl-tRNA synthetase family. In terms of assembly, tetramer of two alpha and two beta subunits.

The protein resides in the cytoplasm. It catalyses the reaction tRNA(Gly) + glycine + ATP = glycyl-tRNA(Gly) + AMP + diphosphate. This Bradyrhizobium diazoefficiens (strain JCM 10833 / BCRC 13528 / IAM 13628 / NBRC 14792 / USDA 110) protein is Glycine--tRNA ligase beta subunit.